A 404-amino-acid polypeptide reads, in one-letter code: S-adenosylmethionine synthase (404 aa).

Position 17 (His17) interacts with ATP. Asp19 is a Mg(2+) binding site. A K(+)-binding site is contributed by Glu45. 2 residues coordinate L-methionine: Glu58 and Gln101. The interval 101-111 (QSPDINRGVDR) is flexible loop. Residues 172 to 174 (DAK), 245 to 246 (RF), Asp254, 260 to 261 (RK), Ala277, and Lys281 each bind ATP. Position 254 (Asp254) interacts with L-methionine. Lys285 lines the L-methionine pocket.

Belongs to the AdoMet synthase family. Homotetramer; dimer of dimers. Mg(2+) is required as a cofactor. Requires K(+) as cofactor.

Its subcellular location is the cytoplasm. The enzyme catalyses L-methionine + ATP + H2O = S-adenosyl-L-methionine + phosphate + diphosphate. The protein operates within amino-acid biosynthesis; S-adenosyl-L-methionine biosynthesis; S-adenosyl-L-methionine from L-methionine: step 1/1. Functionally, catalyzes the formation of S-adenosylmethionine (AdoMet) from methionine and ATP. The overall synthetic reaction is composed of two sequential steps, AdoMet formation and the subsequent tripolyphosphate hydrolysis which occurs prior to release of AdoMet from the enzyme. The protein is S-adenosylmethionine synthase of Pelodictyon phaeoclathratiforme (strain DSM 5477 / BU-1).